The chain runs to 198 residues: Inositol diphosphatase DSP4 (198 aa).

The disordered stretch occupies residues 1–23 (MTLESYAGDVHTVPQSENSMEER). Residues 34–188 (NFAMVDNGIF…LKHTPLSFSC (155 aa)) enclose the Tyrosine-protein phosphatase domain. Residues 90–102 (FGIERCKEPFVNI) form a WPD loop important for active site topology region. 1D-myo-inositol hexakisphosphate is bound by residues asparagine 101 and isoleucine 102. Cysteine 126 serves as the catalytic Phosphocysteine intermediate.

It belongs to the protein-tyrosine phosphatase family. Atypical dual-specificity phosphatase Siw14-like subfamily. Highly expressed in flowers and at lower levels in roots, leaves, stems and siliques.

The enzyme catalyses 5-diphospho-1D-myo-inositol 1,2,3,4,6-pentakisphosphate + H2O = 1D-myo-inositol hexakisphosphate + phosphate + H(+). It carries out the reaction 1,5-bis(diphospho)-1D-myo-inositol 2,3,4,6-tetrakisphosphate + H2O = 1-diphospho-1D-myo-inositol 2,3,4,5,6-pentakisphosphate + phosphate + 2 H(+). The catalysed reaction is 3,5-bis(diphospho)-1D-myo-inositol 1,2,4,6-tetrakisphosphate + H2O = 3-diphospho-1D-myo-inositol 1,2,4,5,6-pentakisphosphate + phosphate + 2 H(+). It catalyses the reaction 6-diphospho-1D-myo-inositol pentakisphosphate + H2O = 1D-myo-inositol hexakisphosphate + phosphate + H(+). Cleaves the beta-phosphate at the 5-position of soluble inositol pyrophosphates. Has highest activity on 5-diphosphoinositol 1,2,3,4,6-pentakisphosphate (5-InsP(7)), 1,5-bis-diphosphoinositol 2,3,4,6-tetrakisphosphate (1,5-InsP(8)) and 3,5-InsP(8). Acts as a negative regulator of defense responses against the bacterial pathogen Pseudomonas syringae pv tomato strain DC3000. The protein is Inositol diphosphatase DSP4 of Arabidopsis thaliana (Mouse-ear cress).